Reading from the N-terminus, the 470-residue chain is Uronate isomerase (470 aa).

It belongs to the metallo-dependent hydrolases superfamily. Uronate isomerase family.

It carries out the reaction D-glucuronate = D-fructuronate. It catalyses the reaction aldehydo-D-galacturonate = keto-D-tagaturonate. It functions in the pathway carbohydrate metabolism; pentose and glucuronate interconversion. The protein is Uronate isomerase of Sphingopyxis alaskensis (strain DSM 13593 / LMG 18877 / RB2256) (Sphingomonas alaskensis).